A 606-amino-acid chain; its full sequence is DNA primase (606 aa).

Residues 40 to 64 form a CHC2-type zinc finger; sequence CPFHQEKTPSFYVVPEKRFYFCHGC. The Toprim domain maps to 256-349; the sequence is KAAVLVEGYF…DPDTFARREG (94 aa). Mg(2+) contacts are provided by Glu262, Asp307, and Asp309. Residues 429–451 are disordered; the sequence is VPLPKPAGGDAPPSSPNRPAPPL. Pro residues predominate over residues 441–451; it reads PSSPNRPAPPL.

This sequence belongs to the DnaG primase family. As to quaternary structure, monomer. Interacts with DnaB. Zn(2+) serves as cofactor. It depends on Mg(2+) as a cofactor.

It catalyses the reaction ssDNA + n NTP = ssDNA/pppN(pN)n-1 hybrid + (n-1) diphosphate.. Functionally, RNA polymerase that catalyzes the synthesis of short RNA molecules used as primers for DNA polymerase during DNA replication. This chain is DNA primase, found in Myxococcus xanthus.